We begin with the raw amino-acid sequence, 416 residues long: 4-hydroxy-3-methylbut-2-en-1-yl diphosphate synthase (flavodoxin) (416 aa).

4 residues coordinate [4Fe-4S] cluster: Cys-304, Cys-307, Cys-350, and Glu-357.

This sequence belongs to the IspG family. The cofactor is [4Fe-4S] cluster.

It catalyses the reaction (2E)-4-hydroxy-3-methylbut-2-enyl diphosphate + oxidized [flavodoxin] + H2O + 2 H(+) = 2-C-methyl-D-erythritol 2,4-cyclic diphosphate + reduced [flavodoxin]. It participates in isoprenoid biosynthesis; isopentenyl diphosphate biosynthesis via DXP pathway; isopentenyl diphosphate from 1-deoxy-D-xylulose 5-phosphate: step 5/6. In terms of biological role, converts 2C-methyl-D-erythritol 2,4-cyclodiphosphate (ME-2,4cPP) into 1-hydroxy-2-methyl-2-(E)-butenyl 4-diphosphate. The polypeptide is 4-hydroxy-3-methylbut-2-en-1-yl diphosphate synthase (flavodoxin) (Rhizobium leguminosarum bv. trifolii (strain WSM2304)).